The following is a 317-amino-acid chain: Acetyl-coenzyme A carboxylase carboxyl transferase subunit beta (317 aa).

Residues 1–28 (MANNMTDTMTKPDINNDSTSLQQNGNKA) form a disordered region. The CoA carboxyltransferase N-terminal domain occupies 55–317 (PSTKCSSCHS…LCSVPNVDVQ (263 aa)). C59, C62, C78, and C81 together coordinate Zn(2+). The C4-type zinc finger occupies 59–81 (CSSCHSIITNTALIFNCYVCPHC).

The protein belongs to the AccD/PCCB family. Acetyl-CoA carboxylase is a heterohexamer composed of biotin carboxyl carrier protein (AccB), biotin carboxylase (AccC) and two subunits each of ACCase subunit alpha (AccA) and ACCase subunit beta (AccD). Zn(2+) serves as cofactor.

Its subcellular location is the cytoplasm. It carries out the reaction N(6)-carboxybiotinyl-L-lysyl-[protein] + acetyl-CoA = N(6)-biotinyl-L-lysyl-[protein] + malonyl-CoA. It functions in the pathway lipid metabolism; malonyl-CoA biosynthesis; malonyl-CoA from acetyl-CoA: step 1/1. Its function is as follows. Component of the acetyl coenzyme A carboxylase (ACC) complex. Biotin carboxylase (BC) catalyzes the carboxylation of biotin on its carrier protein (BCCP) and then the CO(2) group is transferred by the transcarboxylase to acetyl-CoA to form malonyl-CoA. The polypeptide is Acetyl-coenzyme A carboxylase carboxyl transferase subunit beta (Psychrobacter cryohalolentis (strain ATCC BAA-1226 / DSM 17306 / VKM B-2378 / K5)).